A 693-amino-acid polypeptide reads, in one-letter code: ATP-dependent DNA helicase RecG (693 aa).

Residues 48–146 (THLYPIGELL…GDLSTPELQE (99 aa)) form a wedge domain region. Residues 283–448 (DMALDVPMMR…AYADLDTSVI (166 aa)) form the Helicase ATP-binding domain. 296-303 (GDVGSGKT) provides a ligand contact to ATP. Positions 397–400 (DEQH) match the DEAH box motif. The Helicase C-terminal domain maps to 482–628 (EGRQAYWVCT…GFVIAQKDLE (147 aa)).

The protein belongs to the helicase family. RecG subfamily. As to quaternary structure, monomer in solution. Probably a monomer on HJ DNA. Binding to fork DNA is facilitated by SSB; the proteins do not seem to stably associate. Mg(2+) serves as cofactor.

It catalyses the reaction Couples ATP hydrolysis with the unwinding of duplex DNA by translocating in the 3'-5' direction.. It carries out the reaction ATP + H2O = ADP + phosphate + H(+). Its function is as follows. Plays a critical role in recombination and DNA repair. Helps process Holliday junction (HJ) intermediates to mature products by catalyzing branch migration. Has replication fork regression activity, unwinds stalled or blocked replication forks to make a HJ that can be resolved by RuvC or RusA. Also rewinds unwound dsDNA in an ATP-dependent manner. Has double-stranded (ds)DNA unwinding activity characteristic of a DNA helicase with 3'-5' polarity in vitro on linear dsDNA; branched duplex DNA (Y-DNA) substrates adopt different conformations that influence which of the two arms are unwound. Binds and unwinds HJ and Y-DNA but not linear duplex DNA; binds no more than 10 nucleotides of ssDNA at a fork. Has a role in constitutive stable DNA replication (cSDR, DNA replication in the absence of protein synthesis) and R-loop (RNA annealed with dsDNA) formation. Unwinds R-loops but not RNA:DNA hybrids. Is genetically synergistic to RadA and RuvABC. The chain is ATP-dependent DNA helicase RecG from Escherichia coli (strain K12).